A 504-amino-acid polypeptide reads, in one-letter code: Probable cytosol aminopeptidase (504 aa).

Residues Lys274 and Asp279 each coordinate Mn(2+). Lys286 is a catalytic residue. Asp297, Asp356, and Glu358 together coordinate Mn(2+). Arg360 is an active-site residue.

It belongs to the peptidase M17 family. The cofactor is Mn(2+).

Its subcellular location is the cytoplasm. It catalyses the reaction Release of an N-terminal amino acid, Xaa-|-Yaa-, in which Xaa is preferably Leu, but may be other amino acids including Pro although not Arg or Lys, and Yaa may be Pro. Amino acid amides and methyl esters are also readily hydrolyzed, but rates on arylamides are exceedingly low.. The enzyme catalyses Release of an N-terminal amino acid, preferentially leucine, but not glutamic or aspartic acids.. Presumably involved in the processing and regular turnover of intracellular proteins. Catalyzes the removal of unsubstituted N-terminal amino acids from various peptides. The chain is Probable cytosol aminopeptidase from Blochmanniella floridana.